We begin with the raw amino-acid sequence, 121 residues long: Small ribosomal subunit protein uS13 (121 aa).

The segment at 99–121 (GQRTRTNARTRRGARKTVAGKKK) is disordered. Residues 100–121 (QRTRTNARTRRGARKTVAGKKK) show a composition bias toward basic residues.

The protein belongs to the universal ribosomal protein uS13 family. In terms of assembly, part of the 30S ribosomal subunit. Forms a loose heterodimer with protein S19. Forms two bridges to the 50S subunit in the 70S ribosome.

Functionally, located at the top of the head of the 30S subunit, it contacts several helices of the 16S rRNA. In the 70S ribosome it contacts the 23S rRNA (bridge B1a) and protein L5 of the 50S subunit (bridge B1b), connecting the 2 subunits; these bridges are implicated in subunit movement. Contacts the tRNAs in the A and P-sites. The sequence is that of Small ribosomal subunit protein uS13 from Synechococcus sp. (strain RCC307).